The primary structure comprises 175 residues: Large ribosomal subunit protein uL5 (175 aa).

This sequence belongs to the universal ribosomal protein uL5 family. As to quaternary structure, part of the 50S ribosomal subunit; contacts the 5S rRNA and probably tRNA. Forms a bridge to the 30S subunit in the 70S ribosome.

Functionally, this is one of the proteins that bind and probably mediate the attachment of the 5S RNA into the large ribosomal subunit, where it forms part of the central protuberance. In the 70S ribosome it contacts protein S13 of the 30S subunit (bridge B1b), connecting the 2 subunits; this bridge is implicated in subunit movement. May contact the P site tRNA; the 5S rRNA and some of its associated proteins might help stabilize positioning of ribosome-bound tRNAs. The chain is Large ribosomal subunit protein uL5 from Halobacterium salinarum (strain ATCC 29341 / DSM 671 / R1).